The following is a 339-amino-acid chain: Proto-oncogene serine/threonine-protein kinase mos (339 aa).

The 275-residue stretch at Val61–Arg335 folds into the Protein kinase domain. Residues Leu67 to Val75 and Lys88 contribute to the ATP site. The active-site Proton acceptor is the Asp196.

This sequence belongs to the protein kinase superfamily. Ser/Thr protein kinase family. As to quaternary structure, interacts with MAP2K1/MEK1. In terms of tissue distribution, expressed mainly in gonadal tissues, and cardiac and skeletal muscles.

It localises to the cytoplasm. It carries out the reaction L-seryl-[protein] + ATP = O-phospho-L-seryl-[protein] + ADP + H(+). The enzyme catalyses L-threonyl-[protein] + ATP = O-phospho-L-threonyl-[protein] + ADP + H(+). Its function is as follows. Serine/threonine kinase involved in the regulation of MAPK signaling. Is an activator of the ERK1/2 signaling cascade playing an essential role in the stimulation of oocyte maturation. This chain is Proto-oncogene serine/threonine-protein kinase mos, found in Rattus norvegicus (Rat).